The chain runs to 586 residues: uncharacterized protein (586 aa).

Coiled-coil stretches lie at residues T183–N293 and F331–N400.

This is an uncharacterized protein from Bacillus subtilis (strain 168).